Consider the following 247-residue polypeptide: NAD(P)H-quinone oxidoreductase subunit K (247 aa).

[4Fe-4S] cluster is bound by residues Cys-63, Cys-64, Cys-128, and Cys-159. The segment at 218-247 (TRQAPPKELTEAIGMEVPPALASQKQKEEA) is disordered.

This sequence belongs to the complex I 20 kDa subunit family. In terms of assembly, NDH-1 can be composed of about 15 different subunits; different subcomplexes with different compositions have been identified which probably have different functions. The cofactor is [4Fe-4S] cluster.

It is found in the cellular thylakoid membrane. The catalysed reaction is a plastoquinone + NADH + (n+1) H(+)(in) = a plastoquinol + NAD(+) + n H(+)(out). It catalyses the reaction a plastoquinone + NADPH + (n+1) H(+)(in) = a plastoquinol + NADP(+) + n H(+)(out). Functionally, NDH-1 shuttles electrons from an unknown electron donor, via FMN and iron-sulfur (Fe-S) centers, to quinones in the respiratory and/or the photosynthetic chain. The immediate electron acceptor for the enzyme in this species is believed to be plastoquinone. Couples the redox reaction to proton translocation, and thus conserves the redox energy in a proton gradient. Cyanobacterial NDH-1 also plays a role in inorganic carbon-concentration. The sequence is that of NAD(P)H-quinone oxidoreductase subunit K from Crocosphaera subtropica (strain ATCC 51142 / BH68) (Cyanothece sp. (strain ATCC 51142)).